Here is a 393-residue protein sequence, read N- to C-terminus: Phosphoglycerate kinase (393 aa).

Residues 22–24, R37, 60–63, R119, and R152 contribute to the substrate site; these read DFN and HLGR. Residues K202, G293, E324, and 350-353 contribute to the ATP site; that span reads GGDS.

This sequence belongs to the phosphoglycerate kinase family. In terms of assembly, monomer.

The protein localises to the cytoplasm. It catalyses the reaction (2R)-3-phosphoglycerate + ATP = (2R)-3-phospho-glyceroyl phosphate + ADP. It participates in carbohydrate degradation; glycolysis; pyruvate from D-glyceraldehyde 3-phosphate: step 2/5. The sequence is that of Phosphoglycerate kinase from Borreliella afzelii (strain PKo) (Borrelia afzelii).